The chain runs to 465 residues: Cysteine--tRNA ligase (465 aa).

Cys-29 is a binding site for Zn(2+). Residues 31-41 carry the 'HIGH' region motif; it reads PTVYNYIHIGN. The Zn(2+) site is built by Cys-209, His-234, and Glu-238. The short motif at 266–270 is the 'KMSKS' region element; the sequence is KMSKS. Position 269 (Lys-269) interacts with ATP. Ser-270 is subject to Phosphoserine.

The protein belongs to the class-I aminoacyl-tRNA synthetase family. As to quaternary structure, monomer. Zn(2+) is required as a cofactor.

The protein localises to the cytoplasm. The catalysed reaction is tRNA(Cys) + L-cysteine + ATP = L-cysteinyl-tRNA(Cys) + AMP + diphosphate. In Bacillus anthracis (strain A0248), this protein is Cysteine--tRNA ligase.